Reading from the N-terminus, the 241-residue chain is tRNA pseudouridine synthase B (241 aa).

The Nucleophile role is filled by Asp45.

This sequence belongs to the pseudouridine synthase TruB family. Type 1 subfamily.

It catalyses the reaction uridine(55) in tRNA = pseudouridine(55) in tRNA. In terms of biological role, responsible for synthesis of pseudouridine from uracil-55 in the psi GC loop of transfer RNAs. The chain is tRNA pseudouridine synthase B from Chlamydia trachomatis serovar L2 (strain ATCC VR-902B / DSM 19102 / 434/Bu).